The chain runs to 113 residues: C-C motif chemokine 15 (113 aa).

The signal sequence occupies residues 1-21; it reads MKVSVAALSCLMLVAVLGSQA. 3 cysteine pairs are disulfide-bonded: C53–C77, C54–C93, and C64–C104.

Belongs to the intercrine beta (chemokine CC) family. Monomer. The N-terminal is proteolytically cleaved by proteases associated with inflammatory responses. The processed forms CCL15(22-92), CCL15(25-92) and CCL15(29-92) exhibit increase in CCR1-mediated signaling and chemotaxis assays in vitro. In terms of tissue distribution, most abundant in heart, skeletal muscle and adrenal gland. Lower levels in placenta, liver, pancreas and bone marrow. CCL15(22-92), CCL15(25-92) and CCL15(29-92) are found in high levels in synovial fluids from rheumatoid patients.

The protein resides in the secreted. In terms of biological role, chemotactic factor that attracts T-cells and monocytes, but not neutrophils, eosinophils, or B-cells. Acts mainly via CC chemokine receptor CCR1. Also binds to CCR3. CCL15(22-92), CCL15(25-92) and CCL15(29-92) are more potent chemoattractants than the CCL15. The polypeptide is C-C motif chemokine 15 (CCL15) (Homo sapiens (Human)).